The primary structure comprises 285 residues: N(G),N(G)-dimethylarginine dimethylaminohydrolase 1 (285 aa).

A2 bears the N-acetylalanine mark. Substrate contacts are provided by residues L30, D73, 78–79 (ED), R98, and R145. The active-site Proton donor is H173. The residue at position 222 (C222) is an S-nitrosocysteine. Residue V268 coordinates substrate. The residue at position 274 (C274) is an S-nitrosocysteine. The active-site Nucleophile is the C274. A Zn(2+)-binding site is contributed by C274.

The protein belongs to the DDAH family. Monomer. As to expression, detected in brain, liver, kidney and pancreas, and at low levels in skeletal muscle.

It carries out the reaction N(omega),N(omega)-dimethyl-L-arginine + H2O = dimethylamine + L-citrulline. The enzyme catalyses N(omega)-methyl-L-arginine + H2O = L-citrulline + methylamine. With respect to regulation, inhibited by zinc ions. Enzyme purified in the absence of 1,10-phenanthroline contains on average 0.4 zinc atoms per subunit. Inhibited by 4-hydroxy-nonenal through the formation of a covalent adduct with His-173. Competitively inhibited by N(5)-iminopropyl-ornithine. In terms of biological role, hydrolyzes N(G),N(G)-dimethyl-L-arginine (ADMA) and N(G)-monomethyl-L-arginine (MMA) which act as inhibitors of NOS. Has therefore a role in the regulation of nitric oxide generation. The polypeptide is N(G),N(G)-dimethylarginine dimethylaminohydrolase 1 (Homo sapiens (Human)).